Reading from the N-terminus, the 236-residue chain is Peptidase E (236 aa).

Catalysis depends on charge relay system residues Ser122, Asp137, and His159.

This sequence belongs to the peptidase S51 family.

It is found in the cytoplasm. It carries out the reaction Dipeptidase E catalyzes the hydrolysis of dipeptides Asp-|-Xaa. It does not act on peptides with N-terminal Glu, Asn or Gln, nor does it cleave isoaspartyl peptides.. Functionally, hydrolyzes dipeptides containing N-terminal aspartate residues. May play a role in allowing the cell to use peptide aspartate to spare carbon otherwise required for the synthesis of the aspartate family of amino acids. In Shewanella putrefaciens (strain CN-32 / ATCC BAA-453), this protein is Peptidase E.